We begin with the raw amino-acid sequence, 364 residues long: MAHRFPALTSEQKKELSEIAQRIVANGKGILAADESVGTMGNRLQRIKVENTEENRRQFRELLFSVDNSISQSIGGVILFHETLYQKDSQGKLFRNILKEKGIVVGIKLDQGGAPLAGTNKETTIQGLDGLSERCAQYKKDGVDFGKWRAVLRISDQCPSSLAIQENANALARYASICQQNGLVPIVEPEVLPDGDHDLEHCQYVSEKVLAAVYKALNDHHVYLEGTLLKPNMLTAGHACTKKYTPEQVAMATVTALHRTVPAAVPSICFLSGGMSEEDATLNLNAIYRCPLPRPWKLSFSYGRALQASALAAWGGKAANKKATQEAFMKRAVANCQAAQGQYVHTGSSGAASTQSLFTASYTY.

Ala2 is subject to N-acetylalanine. Lys13 bears the N6-succinyllysine mark. Ser36 is subject to Phosphoserine. The residue at position 39 (Thr39) is a Phosphothreonine. A beta-D-fructose 1,6-bisphosphate-binding site is contributed by Arg43. The residue at position 89 (Ser89) is a Phosphoserine. Phosphothreonine is present on Thr119. Residue Lys121 is modified to N6-succinyllysine. The residue at position 132 (Ser132) is a Phosphoserine. Residue Glu188 is the Proton acceptor of the active site. Lys230 serves as the catalytic Schiff-base intermediate with dihydroxyacetone-P. Residues Ser272, Ser276, Ser299, and Ser301 each carry the phosphoserine modification. 272–274 (SGG) is a beta-D-fructose 1,6-bisphosphate binding site. Residue Arg304 coordinates beta-D-fructose 1,6-bisphosphate. Ser309 carries the phosphoserine modification. At Lys317 the chain carries N6-succinyllysine.

The protein belongs to the class I fructose-bisphosphate aldolase family. As to quaternary structure, homotetramer. Interacts with BBS1, BBS2, BBS4 and BBS7. Forms a ternary complex with G6PD and TP53; this interaction is direct.

Its subcellular location is the cytoplasm. It localises to the cytosol. The protein localises to the cytoskeleton. The protein resides in the microtubule organizing center. It is found in the centrosome. Its subcellular location is the centriolar satellite. The catalysed reaction is beta-D-fructose 1,6-bisphosphate = D-glyceraldehyde 3-phosphate + dihydroxyacetone phosphate. It catalyses the reaction beta-D-fructose 1-phosphate = D-glyceraldehyde + dihydroxyacetone phosphate. It functions in the pathway carbohydrate degradation; glycolysis; D-glyceraldehyde 3-phosphate and glycerone phosphate from D-glucose: step 4/4. The protein operates within carbohydrate biosynthesis; gluconeogenesis. Its pathway is carbohydrate metabolism; fructose metabolism. Functionally, catalyzes the aldol cleavage of fructose 1,6-biphosphate to form two triosephosphates dihydroxyacetone phosphate and D-glyceraldehyde 3-phosphate in glycolysis as well as the reverse stereospecific aldol addition reaction in gluconeogenesis. In fructolysis, metabolizes fructose 1-phosphate derived from the phosphorylation of dietary fructose by fructokinase into dihydroxyacetone phosphate and D-glyceraldehyde. Acts as an adapter independently of its enzymatic activity, exerts a tumor suppressor role by stabilizing the ternary complex with G6PD and TP53 to inhibit G6PD activity and keep oxidative pentose phosphate metabolism in check. The sequence is that of Fructose-bisphosphate aldolase B (Aldob) from Rattus norvegicus (Rat).